Here is a 254-residue protein sequence, read N- to C-terminus: tRNA (guanine-N(7)-)-methyltransferase (254 aa).

The tract at residues M1 to G34 is disordered. Positions 87, 112, 139, and 162 each coordinate S-adenosyl-L-methionine. The active site involves D162. Substrate contacts are provided by residues K166, D198, and T233–E236.

The protein belongs to the class I-like SAM-binding methyltransferase superfamily. TrmB family.

It carries out the reaction guanosine(46) in tRNA + S-adenosyl-L-methionine = N(7)-methylguanosine(46) in tRNA + S-adenosyl-L-homocysteine. It functions in the pathway tRNA modification; N(7)-methylguanine-tRNA biosynthesis. Catalyzes the formation of N(7)-methylguanine at position 46 (m7G46) in tRNA. The polypeptide is tRNA (guanine-N(7)-)-methyltransferase (Bordetella bronchiseptica (strain ATCC BAA-588 / NCTC 13252 / RB50) (Alcaligenes bronchisepticus)).